A 64-amino-acid polypeptide reads, in one-letter code: uncharacterized protein (64 aa).

A compositionally biased stretch (polar residues) spans 1–14; the sequence is MFNFDPTDQPTDQH. The segment at 1–42 is disordered; it reads MFNFDPTDQPTDQHLLQLPTDPHPLQQPIDPHPPPQPNNNLP.

This is an uncharacterized protein from Dictyostelium discoideum (Social amoeba).